A 100-amino-acid polypeptide reads, in one-letter code: Urease subunit gamma (100 aa).

The protein belongs to the urease gamma subunit family. Heterotrimer of UreA (gamma), UreB (beta) and UreC (alpha) subunits. Three heterotrimers associate to form the active enzyme.

The protein localises to the cytoplasm. The catalysed reaction is urea + 2 H2O + H(+) = hydrogencarbonate + 2 NH4(+). The protein operates within nitrogen metabolism; urea degradation; CO(2) and NH(3) from urea (urease route): step 1/1. The polypeptide is Urease subunit gamma (Haemophilus influenzae (strain ATCC 51907 / DSM 11121 / KW20 / Rd)).